A 159-amino-acid polypeptide reads, in one-letter code: Phosphopantetheine adenylyltransferase (159 aa).

Position 9 (Thr-9) interacts with substrate. ATP is bound by residues 9-10 (TF) and His-17. Residues Lys-41, Leu-73, and Arg-87 each coordinate substrate. ATP is bound by residues 88–90 (GLR), Glu-98, and 123–129 (YSFISST).

It belongs to the bacterial CoaD family. Homohexamer. Mg(2+) serves as cofactor.

It localises to the cytoplasm. It catalyses the reaction (R)-4'-phosphopantetheine + ATP + H(+) = 3'-dephospho-CoA + diphosphate. Its pathway is cofactor biosynthesis; coenzyme A biosynthesis; CoA from (R)-pantothenate: step 4/5. Its function is as follows. Reversibly transfers an adenylyl group from ATP to 4'-phosphopantetheine, yielding dephospho-CoA (dPCoA) and pyrophosphate. The chain is Phosphopantetheine adenylyltransferase from Pseudomonas aeruginosa (strain LESB58).